A 163-amino-acid chain; its full sequence is Large ribosomal subunit protein uL11 (163 aa).

Residues 1-26 (MAETIEVLVAGGQADPGPPLGPELGP) are disordered.

Belongs to the universal ribosomal protein uL11 family. In terms of assembly, part of the ribosomal stalk of the 50S ribosomal subunit. Interacts with L10 and the large rRNA to form the base of the stalk. L10 forms an elongated spine to which L12 dimers bind in a sequential fashion forming a multimeric L10(L12)X complex.

Its function is as follows. Forms part of the ribosomal stalk which helps the ribosome interact with GTP-bound translation factors. This Halobacterium salinarum (strain ATCC 29341 / DSM 671 / R1) protein is Large ribosomal subunit protein uL11.